A 1239-amino-acid chain; its full sequence is Erythroid differentiation-related factor 1 (1239 aa).

Disordered stretches follow at residues 1-39 (MGDP…QGSA), 219-269 (AQPV…REPL), 517-559 (PKKE…DPAD), and 620-646 (KKES…TRGG). Composition is skewed to low complexity over residues 9-28 (AEAS…LSQA) and 253-263 (SSVSEDPSASS). A compositionally biased stretch (acidic residues) spans 530 to 547 (NSDESYSEEEEEMADSDE). 2 TPR repeats span residues 693–726 (SKAY…HDTY) and 914–953 (AQAH…LGTR).

Its subcellular location is the nucleus. Its function is as follows. Transcription factor involved in erythroid differentiation. Involved in transcriptional activation of the globin gene. In Mus musculus (Mouse), this protein is Erythroid differentiation-related factor 1 (Edrf1).